A 462-amino-acid chain; its full sequence is 7-hydroxymethyl chlorophyll a reductase, chloroplastic (462 aa).

The transit peptide at 1-20 (MITVVTSRLSLLPPVFSVVN) directs the protein to the chloroplast.

Belongs to the FrhB family. In terms of assembly, interacts with SGR1, the chlorophyll catabolic enzymes (CCEs) NYC1, NOL and RCCR, and the LHCII complex. Part of a SGR1-CCE-LHCII complex, which acts in chlorophyll breakdown. The cofactor is FAD. Iron-sulfur cluster serves as cofactor.

The protein resides in the plastid. Its subcellular location is the chloroplast. It carries out the reaction chlorophyll a + 2 oxidized [2Fe-2S]-[ferredoxin] + H2O = 7(1)-hydroxychlorophyll a + 2 reduced [2Fe-2S]-[ferredoxin] + 2 H(+). Probable iron-sulfur flavoprotein that converts 7-hydroxymethyl chlorophyll a to chlorophyll a using ferredoxin as a reducing equivalent. Catalyzes the reduction of a hydroxymethyl group to a methyl group. Belongs to the chlorophyll catabolic enzymes (CCEs). The sequence is that of 7-hydroxymethyl chlorophyll a reductase, chloroplastic (HCAR) from Arabidopsis thaliana (Mouse-ear cress).